The primary structure comprises 424 residues: Interleukin-13 receptor subunit alpha-1 (424 aa).

The N-terminal stretch at 1–25 is a signal peptide; that stretch reads MARPALLGELLVLLLWTATVGQVAA. Topologically, residues 26 to 340 are extracellular; it reads ATEVQPPVTN…QSIGKEQNST (315 aa). The region spanning 32-121 is the Fibronectin type-III 1 domain; sequence PVTNLSVSVE…VKKCISPPEG (90 aa). Residues N35, N59, N103, and N136 are each glycosylated (N-linked (GlcNAc...) asparagine). Residues C44 and C93 are joined by a disulfide bond. Intrachain disulfides connect C132–C142 and C171–C183. Residues 224–336 enclose the Fibronectin type-III 2 domain; the sequence is KPDPPHIKHL…WSEAQSIGKE (113 aa). A glycan (N-linked (GlcNAc...) asparagine) is linked at N262. The short motif at 324-328 is the WSXWS motif element; sequence WSDWS. The N-linked (GlcNAc...) asparagine glycan is linked to N338. A helical transmembrane segment spans residues 341-364; it reads FYTTMLLTIPVFVAVAVIILLFYL. At 365 to 424 the chain is on the cytoplasmic side; sequence KRLKIIIFPPIPDPGKIFKEMFGDQNDDTLHWKKYDIYEKQSKEETDSVVLIENLKKAAP. The Box 1 motif motif lies at 371–379; it reads IFPPIPDPG.

Belongs to the type I cytokine receptor family. Type 5 subfamily. In terms of assembly, interleukin-13 receptor is a complex of IL4R, IL13RA1, and possibly other components. Interacts with TRAF3IP1. Interacts with IL4. Spleen, liver, thymus, heart, lung, kidney, testis, stomach, brain, skin, and colon; but not skeletal muscle.

Its subcellular location is the membrane. Functionally, binds with low affinity to interleukin-13 (IL13). Together with IL4RA can form a functional receptor for IL13. Also serves as an alternate accessory protein to the common cytokine receptor gamma chain for interleukin-4 (IL4) signaling, but cannot replace the function of IL2RG in allowing enhanced interleukin-2 (IL2) binding activity. The protein is Interleukin-13 receptor subunit alpha-1 (Il13ra1) of Mus musculus (Mouse).